The chain runs to 346 residues: Methylthioribose-1-phosphate isomerase (346 aa).

Substrate-binding positions include 54 to 56, Arg91, and Gln192; that span reads RGA. Residue Asp233 is the Proton donor of the active site. 243 to 244 lines the substrate pocket; that stretch reads NK.

This sequence belongs to the eIF-2B alpha/beta/delta subunits family. MtnA subfamily.

It carries out the reaction 5-(methylsulfanyl)-alpha-D-ribose 1-phosphate = 5-(methylsulfanyl)-D-ribulose 1-phosphate. Its pathway is amino-acid biosynthesis; L-methionine biosynthesis via salvage pathway; L-methionine from S-methyl-5-thio-alpha-D-ribose 1-phosphate: step 1/6. Catalyzes the interconversion of methylthioribose-1-phosphate (MTR-1-P) into methylthioribulose-1-phosphate (MTRu-1-P). The protein is Methylthioribose-1-phosphate isomerase of Yersinia pseudotuberculosis serotype IB (strain PB1/+).